A 216-amino-acid polypeptide reads, in one-letter code: Adenylate kinase (216 aa).

10–15 contributes to the ATP binding site; the sequence is GAGKGT. The interval 30 to 59 is NMP; sequence STGDIFRANIKEKTPLGIEAKRYIDNGQLV. AMP-binding positions include Thr-31, Arg-36, 57-59, 85-88, and Gln-92; these read QLV and GFPR. Residues 126-163 are LID; that stretch reads GRRVCTSCGASYHIRFNPPKIEGKCDICDNELIQRKDD. Arg-127 contacts ATP. Residues Cys-130 and Cys-133 each coordinate Zn(2+). 136-137 contacts ATP; it reads SY. Residues Cys-150 and Cys-153 each coordinate Zn(2+). AMP contacts are provided by Arg-160 and Arg-171. ATP is bound at residue Glu-199.

This sequence belongs to the adenylate kinase family. As to quaternary structure, monomer.

The protein localises to the cytoplasm. It carries out the reaction AMP + ATP = 2 ADP. Its pathway is purine metabolism; AMP biosynthesis via salvage pathway; AMP from ADP: step 1/1. In terms of biological role, catalyzes the reversible transfer of the terminal phosphate group between ATP and AMP. Plays an important role in cellular energy homeostasis and in adenine nucleotide metabolism. This Clostridium botulinum (strain ATCC 19397 / Type A) protein is Adenylate kinase.